The sequence spans 384 residues: MSIAVFIDGTDAQQVTELKKFLKSYGAKVLDNTECSDANWPDELIKCIKFLNVCWKDESIAESDAKDVLTSVASMFIQLPPNKLIEAVPLFCEKLLDFSGDNIRRHKNKLFPLNLLFWGLNPKSHPRYEIFLTLIECAEKMGVLNEVITDPKKVASWLSECDCTVEECQKVWQKLYDAHIALGENRKAIEAMIYLLSTYNEVTAVNARQNAIKCIISVLQDPCLLSHDQLYALKPVQYLEGEPVHDFFKIFVSGDLNTFKNFLAKHPNFLSHNNLSEEACVHKLRLLTLMQLSENVNELSYHEAATQLGLKIEELEPFIIEAVRQRAVACKLDQVQKKILITGAFPRTFGRPQWINLHDTLVQWRSHLGTVQSSLSMMIQNESS.

The PCI domain maps to glutamate 184–proline 346.

The protein belongs to the eIF-3 subunit M family. In terms of assembly, component of the eukaryotic translation initiation factor 3 (eIF-3) complex.

It localises to the cytoplasm. Component of the eukaryotic translation initiation factor 3 (eIF-3) complex, which is involved in protein synthesis of a specialized repertoire of mRNAs and, together with other initiation factors, stimulates binding of mRNA and methionyl-tRNAi to the 40S ribosome. The eIF-3 complex specifically targets and initiates translation of a subset of mRNAs involved in cell proliferation. This is Eukaryotic translation initiation factor 3 subunit M from Schistosoma japonicum (Blood fluke).